We begin with the raw amino-acid sequence, 609 residues long: UvrABC system protein C (609 aa).

The region spanning 16-94 (SSPGVYRMYD…IKQYMPRYNV (79 aa)) is the GIY-YIG domain. Residues 203 to 238 (LQVMTELVSKMEASALALEYEQAASYRDQIAALRRV) enclose the UVR domain.

Belongs to the UvrC family. As to quaternary structure, interacts with UvrB in an incision complex.

It localises to the cytoplasm. The UvrABC repair system catalyzes the recognition and processing of DNA lesions. UvrC both incises the 5' and 3' sides of the lesion. The N-terminal half is responsible for the 3' incision and the C-terminal half is responsible for the 5' incision. This chain is UvrABC system protein C, found in Shewanella sediminis (strain HAW-EB3).